Reading from the N-terminus, the 881-residue chain is Alanine--tRNA ligase (881 aa).

The protein belongs to the class-II aminoacyl-tRNA synthetase family.

Its subcellular location is the cytoplasm. It catalyses the reaction tRNA(Ala) + L-alanine + ATP = L-alanyl-tRNA(Ala) + AMP + diphosphate. In terms of biological role, catalyzes the attachment of alanine to tRNA(Ala) in a two-step reaction: alanine is first activated by ATP to form Ala-AMP and then transferred to the acceptor end of tRNA(Ala). Also edits incorrectly charged Ser-tRNA(Ala) and Gly-tRNA(Ala) via its editing domain. This chain is Alanine--tRNA ligase (alaS), found in Lacticaseibacillus paracasei (strain ATCC 334 / BCRC 17002 / CCUG 31169 / CIP 107868 / KCTC 3260 / NRRL B-441) (Lactobacillus paracasei).